Reading from the N-terminus, the 195-residue chain is uncharacterized protein (195 aa).

An N-terminal signal peptide occupies residues 1–21 (MHFSSCVLVSALAIVTNVATA). N62 and N109 each carry an N-linked (GlcNAc...) asparagine glycan. The tract at residues 119 to 141 (DWDEDTVTGENAPDSGEPFSTSH) is disordered.

It is found in the secreted. This is an uncharacterized protein from Arthroderma benhamiae (strain ATCC MYA-4681 / CBS 112371) (Trichophyton mentagrophytes).